The primary structure comprises 1975 residues: Cadherin-87A (1975 aa).

The first 17 residues, 1-17 (MKLPLGLLMICLGLTLA), serve as a signal peptide directing secretion. Topologically, residues 18-1775 (KGETNLPPVF…AIVQDEFDLA (1758 aa)) are extracellular. 14 consecutive Cadherin domains span residues 28 to 132 (TQTL…PPEF), 133 to 245 (QNTP…PPVF), 246 to 358 (QGSL…PPVF), 359 to 472 (NHKE…KPVF), 473 to 669 (EQES…PPVC), 670 to 774 (ESPL…VPNF), 775 to 878 (EQQS…DPYF), 879 to 998 (VPAT…PPRF), 999 to 1103 (NAPW…DPKF), 1104 to 1211 (SQSD…APVF), 1212 to 1318 (TRDV…KPEF), 1319 to 1431 (VIPA…RPEF), 1432 to 1553 (PDAS…PPVF), and 1554 to 1677 (EKPI…PPEE). Asparagine 39, asparagine 77, and asparagine 203 each carry an N-linked (GlcNAc...) asparagine glycan. Asparagine 424 carries N-linked (GlcNAc...) asparagine glycosylation. A disordered region spans residues 535–560 (CHDNGESNRRERRDLNEDEHVEEDDG). A compositionally biased stretch (basic and acidic residues) spans 537-549 (DNGESNRRERRDL). A compositionally biased stretch (acidic residues) spans 550-560 (NEDEHVEEDDG). N-linked (GlcNAc...) asparagine glycans are attached at residues asparagine 730 and asparagine 761. N-linked (GlcNAc...) asparagine glycosylation is found at asparagine 1039, asparagine 1049, asparagine 1111, asparagine 1163, asparagine 1217, asparagine 1325, asparagine 1349, asparagine 1492, asparagine 1576, and asparagine 1691. Residues 1776-1796 (VAGLVALVIVLFVGVISFIVL) traverse the membrane as a helical segment. Topologically, residues 1797 to 1975 (CCCLKHWNLS…DGDDAVAELI (179 aa)) are cytoplasmic. The span at 1887-1899 (YATIQPRNNQNRL) shows a compositional bias: polar residues. The disordered stretch occupies residues 1887-1916 (YATIQPRNNQNRLTGGGGAGGGSMRSGGGA). Over residues 1900-1916 (TGGGGAGGGSMRSGGGA) the composition is skewed to gly residues.

It localises to the cell membrane. In terms of biological role, cadherins are calcium-dependent cell adhesion proteins. They preferentially interact with themselves in a homophilic manner in connecting cells. The chain is Cadherin-87A (Cad87A) from Drosophila melanogaster (Fruit fly).